The chain runs to 170 residues: Putative pre-16S rRNA nuclease (170 aa).

Belongs to the YqgF nuclease family.

The protein localises to the cytoplasm. Could be a nuclease involved in processing of the 5'-end of pre-16S rRNA. The protein is Putative pre-16S rRNA nuclease of Synechococcus sp. (strain JA-2-3B'a(2-13)) (Cyanobacteria bacterium Yellowstone B-Prime).